Reading from the N-terminus, the 1397-residue chain is DNA-directed RNA polymerase subunit beta' (1397 aa).

Positions 75, 77, 90, and 93 each coordinate Zn(2+). D465, D467, and D469 together coordinate Mg(2+). C819, C893, C900, and C903 together coordinate Zn(2+).

It belongs to the RNA polymerase beta' chain family. As to quaternary structure, the RNAP catalytic core consists of 2 alpha, 1 beta, 1 beta' and 1 omega subunit. When a sigma factor is associated with the core the holoenzyme is formed, which can initiate transcription. Requires Mg(2+) as cofactor. The cofactor is Zn(2+).

The enzyme catalyses RNA(n) + a ribonucleoside 5'-triphosphate = RNA(n+1) + diphosphate. DNA-dependent RNA polymerase catalyzes the transcription of DNA into RNA using the four ribonucleoside triphosphates as substrates. This is DNA-directed RNA polymerase subunit beta' from Acinetobacter baylyi (strain ATCC 33305 / BD413 / ADP1).